A 413-amino-acid chain; its full sequence is Multifunctional CCA protein (413 aa).

The ATP site is built by glycine 8 and arginine 11. CTP-binding residues include glycine 8 and arginine 11. Residues aspartate 21 and aspartate 23 each contribute to the Mg(2+) site. Residues arginine 91, arginine 143, and arginine 146 each contribute to the ATP site. Positions 91, 143, and 146 each coordinate CTP. The 102-residue stretch at 232-333 (TGVHVMMVVD…VRLFERSDAL (102 aa)) folds into the HD domain.

The protein belongs to the tRNA nucleotidyltransferase/poly(A) polymerase family. Bacterial CCA-adding enzyme type 1 subfamily. In terms of assembly, monomer. Can also form homodimers and oligomers. Mg(2+) is required as a cofactor. Requires Ni(2+) as cofactor.

It catalyses the reaction a tRNA precursor + 2 CTP + ATP = a tRNA with a 3' CCA end + 3 diphosphate. The catalysed reaction is a tRNA with a 3' CCA end + 2 CTP + ATP = a tRNA with a 3' CCACCA end + 3 diphosphate. Its function is as follows. Catalyzes the addition and repair of the essential 3'-terminal CCA sequence in tRNAs without using a nucleic acid template. Adds these three nucleotides in the order of C, C, and A to the tRNA nucleotide-73, using CTP and ATP as substrates and producing inorganic pyrophosphate. tRNA 3'-terminal CCA addition is required both for tRNA processing and repair. Also involved in tRNA surveillance by mediating tandem CCA addition to generate a CCACCA at the 3' terminus of unstable tRNAs. While stable tRNAs receive only 3'-terminal CCA, unstable tRNAs are marked with CCACCA and rapidly degraded. The protein is Multifunctional CCA protein of Burkholderia vietnamiensis (strain G4 / LMG 22486) (Burkholderia cepacia (strain R1808)).